A 1622-amino-acid chain; its full sequence is WD repeat-containing protein 97 (1622 aa).

WD repeat units lie at residues 187 to 233, 290 to 329, 331 to 370, 552 to 592, 594 to 633, and 687 to 726; these read SEQG…RRLV, LHKT…RMVF, GHTG…QVGE, ELRC…TVFQ, EAHS…EESL, and DPTD…LRLL. Disordered stretches follow at residues 1090–1112 and 1453–1472; these read GEKP…EDEE and LHPA…EETD. A coiled-coil region spans residues 1094 to 1118; sequence GEEGEEDKKEEEEEKEDEELDWALA. Positions 1096–1112 are enriched in acidic residues; the sequence is EGEEDKKEEEEEKEDEE.

The chain is WD repeat-containing protein 97 from Homo sapiens (Human).